The primary structure comprises 292 residues: Acetylglutamate kinase (292 aa).

Substrate-binding positions include 64–65, arginine 86, and asparagine 190; that span reads GG.

Belongs to the acetylglutamate kinase family. ArgB subfamily.

It localises to the cytoplasm. The enzyme catalyses N-acetyl-L-glutamate + ATP = N-acetyl-L-glutamyl 5-phosphate + ADP. Its pathway is amino-acid biosynthesis; L-arginine biosynthesis; N(2)-acetyl-L-ornithine from L-glutamate: step 2/4. In terms of biological role, catalyzes the ATP-dependent phosphorylation of N-acetyl-L-glutamate. The sequence is that of Acetylglutamate kinase from Geobacter sulfurreducens (strain ATCC 51573 / DSM 12127 / PCA).